Consider the following 231-residue polypeptide: PX domain-containing protein 1 (231 aa).

Positions 1-134 constitute a PX domain; that stretch reads MASAVFEGTS…TFFERSPLDQ (134 aa).

This Homo sapiens (Human) protein is PX domain-containing protein 1 (PXDC1).